A 478-amino-acid chain; its full sequence is Succinyl-CoA:acetate/propanoyl-CoA:succinate CoA transferase (478 aa).

A mitochondrion-targeting transit peptide spans 1–30 (MYQLAFLRCRYASPIVREARRAFHASRKCQ). 256 to 260 (GIGAI) lines the CoA pocket. Catalysis depends on E279, which acts as the 5-glutamyl coenzyme A thioester intermediate. CoA contacts are provided by I354, G377, and K404.

The protein belongs to the acetyl-CoA hydrolase/transferase family.

The protein resides in the mitochondrion. It catalyses the reaction succinyl-CoA + acetate = succinate + acetyl-CoA. The catalysed reaction is propanoyl-CoA + succinate = propanoate + succinyl-CoA. Transferase involved in anaerobic fumarate-respiration in the mitochondria. Catalyzes the transfer of the CoA moiety of acetyl-CoA or propionyl-CoA to succinate, thereby forming acetate and propionate, respectively. Acetate and propionate are the two major metabolic end products in the anaerobic mitochondrial metabolism of F.hepatica. Also displays CoA transferase activities from acetyl-CoA to propionate, acetate and butyrate. The protein is Succinyl-CoA:acetate/propanoyl-CoA:succinate CoA transferase of Fasciola hepatica (Liver fluke).